A 114-amino-acid polypeptide reads, in one-letter code: Large ribosomal subunit protein uL22 (114 aa).

It belongs to the universal ribosomal protein uL22 family. As to quaternary structure, part of the 50S ribosomal subunit.

Functionally, this protein binds specifically to 23S rRNA; its binding is stimulated by other ribosomal proteins, e.g. L4, L17, and L20. It is important during the early stages of 50S assembly. It makes multiple contacts with different domains of the 23S rRNA in the assembled 50S subunit and ribosome. Its function is as follows. The globular domain of the protein is located near the polypeptide exit tunnel on the outside of the subunit, while an extended beta-hairpin is found that lines the wall of the exit tunnel in the center of the 70S ribosome. This Myxococcus xanthus (strain DK1622) protein is Large ribosomal subunit protein uL22.